A 152-amino-acid chain; its full sequence is ARL14 effector protein-like (152 aa).

The disordered stretch occupies residues 1–21 (MNEQSEKNNSIQERHTDHSFP).

This Homo sapiens (Human) protein is ARL14 effector protein-like (ARL14EPL).